The chain runs to 1499 residues: Rho GTPase-activating protein 35 (1499 aa).

Positions 1-266 (MMMARKQDVR…IPYFEALKQQ (266 aa)) are has GTPase activity, required for proper localization. Residues Lys28, 33-37 (IGKSC), Leu52, Ser56, 95-97 (EQT), 201-203 (KCD), and 229-231 (SAR) contribute to the GTP site. FF domains lie at 270-327 (IATA…HIHR), 368-422 (KLLE…HLEK), 429-483 (RAEM…HQKQ), and 485-550 (IDRA…HIHF). Tyr308 is modified (phosphotyrosine). Ser589 is subject to Phosphoserine. In terms of domain architecture, pG1 pseudoGTPase spans 592-767 (DPNIDRINLV…LLDSKRNLNL (176 aa)). 2 positions are modified to phosphoserine: Ser770 and Ser773. The pG2 pseudoGTPase domain occupies 783-947 (RIVMCLMCGD…FKDVVEKKNI (165 aa)). Ser970, Ser975, Ser985, and Ser1072 each carry phosphoserine. Tyr1087 carries the post-translational modification Phosphotyrosine. A Phosphotyrosine; by ABL2 and PTK6 modification is found at Tyr1105. Residues 1124 to 1141 (KAQSNGSGNGSDSEMDTS) are compositionally biased toward polar residues. The tract at residues 1124 to 1148 (KAQSNGSGNGSDSEMDTSSLERGRK) is disordered. A phosphoserine mark is found at Ser1134, Ser1142, Ser1150, Ser1176, Ser1179, and Ser1221. Positions 1177–1207 (VGSDDELGPIRKKEEDQASQGYKGDNAVIPY) are disordered. The segment at 1213–1236 (PRRRNILRSLRRNTKKPKPKPRPS) is required for phospholipid binding and regulation of the substrate preference. Thr1226 is modified (phosphothreonine). At Ser1236 the chain carries Phosphoserine. The region spanning 1249-1436 (VPLTTVVTPE…LFIQQCPFFF (188 aa)) is the Rho-GAP domain. Positions 1446 to 1499 (GAAPGSPSAMAPTVPFLTSTPATSQPSPPQSPPPTPQSPMQPLLSSQLQAEHTL) are disordered. A compositionally biased stretch (low complexity) spans 1448–1470 (APGSPSAMAPTVPFLTSTPATSQ). Pro residues predominate over residues 1471–1484 (PSPPQSPPPTPQSP). A phosphoserine mark is found at Ser1472 and Ser1476. Thr1480 is subject to Phosphothreonine. A Phosphoserine modification is found at Ser1483. Residues 1485–1499 (MQPLLSSQLQAEHTL) show a composition bias toward low complexity.

Interacts with RASA1. Interacts with the general transcription factor GTF2I, the interaction sequesters GTF2I in the cytoplasm. Post-translationally, phosphorylation of Tyr-1105 by PTK6 promotes the association with RASA1, inactivating RHOA while activating RAS. Phosphorylation at Tyr-308 by PDGFRA inhibits binding to GTF2I. Phosphorylated by PRKCA at Ser-1221 and Thr-1226, induces relocalization from the cytoplasm to regions of plasma membrane ruffling and prevents the binding and substrate specificity regulation by phospholipids. In brain, phosphorylated by FYN and SRC. During focal adhesion formation, phosphorylated by MAPK1 and MAPK3 at the C-terminal region, probably at Ser-1451, Ser-1476, Thr-1480 and Ser-1483. Phosphorylation by MAPK1 and MAPK3 inhibits GAP function and localizes ARGHAP35 away from newly forming focal adhesions and stress fibers in cells spreading on fibronectin. Phosphorylation at Ser-1476 and Thr-1480 by GSK3B requires priming by MAPK and inhibits RhoGAP activity and modulates polarized cell migration. Ubiquitously expressed.

It localises to the cytoplasm. The protein resides in the cytoskeleton. Its subcellular location is the cilium basal body. The protein localises to the nucleus. It is found in the cell membrane. Its function is as follows. Rho GTPase-activating protein (GAP). Binds several acidic phospholipids which inhibits the Rho GAP activity to promote the Rac GAP activity. This binding is inhibited by phosphorylation by PRKCA. Involved in cell differentiation as well as cell adhesion and migration, plays an important role in retinal tissue morphogenesis, neural tube fusion, midline fusion of the cerebral hemispheres and mammary gland branching morphogenesis. Transduces signals from p21-ras to the nucleus, acting via the ras GTPase-activating protein (GAP). Transduces SRC-dependent signals from cell-surface adhesion molecules, such as laminin, to promote neurite outgrowth. Regulates axon outgrowth, guidance and fasciculation. Modulates Rho GTPase-dependent F-actin polymerization, organization and assembly, is involved in polarized cell migration and in the positive regulation of ciliogenesis and cilia elongation. During mammary gland development, is required in both the epithelial and stromal compartments for ductal outgrowth. Represses transcription of the glucocorticoid receptor by binding to the cis-acting regulatory sequence 5'-GAGAAAAGAAACTGGAGAAACTC-3'; this function is however unclear and would need additional experimental evidences. The protein is Rho GTPase-activating protein 35 of Rattus norvegicus (Rat).